The following is an 89-amino-acid chain: Small ribosomal subunit protein uS15 (89 aa).

This sequence belongs to the universal ribosomal protein uS15 family. As to quaternary structure, part of the 30S ribosomal subunit. Forms a bridge to the 50S subunit in the 70S ribosome, contacting the 23S rRNA.

Its function is as follows. One of the primary rRNA binding proteins, it binds directly to 16S rRNA where it helps nucleate assembly of the platform of the 30S subunit by binding and bridging several RNA helices of the 16S rRNA. Functionally, forms an intersubunit bridge (bridge B4) with the 23S rRNA of the 50S subunit in the ribosome. This is Small ribosomal subunit protein uS15 from Geobacillus stearothermophilus (Bacillus stearothermophilus).